The following is a 192-amino-acid chain: Peptidyl-tRNA hydrolase (192 aa).

Residue histidine 19 is the Proton acceptor of the active site. 3 residues coordinate tRNA: tyrosine 64, asparagine 66, and asparagine 112.

This sequence belongs to the PTH family. Monomer.

Its subcellular location is the cytoplasm. It catalyses the reaction an N-acyl-L-alpha-aminoacyl-tRNA + H2O = an N-acyl-L-amino acid + a tRNA + H(+). Its function is as follows. Hydrolyzes ribosome-free peptidyl-tRNAs (with 1 or more amino acids incorporated), which drop off the ribosome during protein synthesis, or as a result of ribosome stalling. Catalyzes the release of premature peptidyl moieties from peptidyl-tRNA molecules trapped in stalled 50S ribosomal subunits, and thus maintains levels of free tRNAs and 50S ribosomes. The sequence is that of Peptidyl-tRNA hydrolase from Acidiphilium cryptum (strain JF-5).